Here is a 266-residue protein sequence, read N- to C-terminus: UPF0294 protein Ent638_0743 (266 aa).

This sequence belongs to the UPF0294 family.

It localises to the cytoplasm. The protein is UPF0294 protein Ent638_0743 of Enterobacter sp. (strain 638).